Consider the following 455-residue polypeptide: Indoleacetamide hydrolase (455 aa).

Active-site charge relay system residues include Lys-71 and Ser-146. Ser-170 acts as the Acyl-ester intermediate in catalysis.

This sequence belongs to the amidase family.

It participates in plant hormone metabolism; auxin biosynthesis. Hydrolyzes indole-3-acetamide (IAM) into indole-3-acetic acid (IAA). The protein is Indoleacetamide hydrolase (iaaH) of Pseudomonas savastanoi (Pseudomonas syringae pv. savastanoi).